The sequence spans 458 residues: RuvB-like protein 1 (458 aa).

Gly73 to Thr80 contributes to the ATP binding site.

It belongs to the RuvB family. As to quaternary structure, interacts with FRI, and with FLX and FES1, two component of the transcription activator complex FRI-C. Interacts with the disease resistance genes RPM1 and RPP5.

The protein resides in the nucleus. The catalysed reaction is ATP + H2O = ADP + phosphate + H(+). Its function is as follows. Proposed core component of the chromatin remodeling INO80 complex which is involved in transcriptional regulation, DNA replication and probably DNA repair. Component of the NuA4 histone acetyltransferase complex which is involved in transcriptional activation of select genes principally by acetylation of nucleosomal histones H4 and H2A. Has single-stranded DNA-stimulated ATPase and ATP-dependent DNA helicase (3' to 5') activity suggesting a role in nuclear processes such as recombination and transcription. The protein is RuvB-like protein 1 (RIN1) of Arabidopsis thaliana (Mouse-ear cress).